A 49-amino-acid polypeptide reads, in one-letter code: Large ribosomal subunit protein eL40 (49 aa).

This sequence belongs to the eukaryotic ribosomal protein eL40 family.

The polypeptide is Large ribosomal subunit protein eL40 (Haloquadratum walsbyi (strain DSM 16790 / HBSQ001)).